Here is a 348-residue protein sequence, read N- to C-terminus: Ileal sodium/bile acid cotransporter (348 aa).

Residues 1–28 (MDNSSICNPNATICEGDSCIAPESNFNA) are Extracellular-facing. 2 N-linked (GlcNAc...) asparagine glycosylation sites follow: Asn3 and Asn10. A helical membrane pass occupies residues 29–49 (ILSVVMSTVLTILLALVMFSM). At 50-81 (GCNVELHKFLGHLRRPWGIVVGFLCQFGIMPL) the chain is on the cytoplasmic side. The chain crosses the membrane as a helical span at residues 82–102 (TGFVLSVAFGILPVQAVVVLI). Topologically, residues 103–126 (QGCCPGGTASNILAYWVDGDMDLS) are extracellular. The helical transmembrane segment at 127-147 (VSMTTCSTLLALGMMPLCLFI) threads the bilayer. Residues 148–157 (YTKMWVDSGT) lie on the Cytoplasmic side of the membrane. A helical transmembrane segment spans residues 158–178 (IVIPYDSIGTSLVALVIPVSI). Over 179–195 (GMYVNHKWPQKAKIILK) the chain is Extracellular. Residues 196-216 (IGSIAGAILIVLIAVVGGILY) form a helical membrane-spanning segment. Residues 217–224 (QSAWTIEP) lie on the Cytoplasmic side of the membrane. A helical transmembrane segment spans residues 225–245 (KLWIIGTIYPIAGYGLGFFLA). At 246–284 (RIAGQPWYRCRTVALETGLQNTQLCSTIVQLSFSPEDLN) the chain is on the extracellular side. Residues 285 to 305 (LVFTFPLIYSIFQIAFAAILL) traverse the membrane as a helical segment. Residues 306–348 (GAYVAYKKCHGKNNTELQEKTDNEMEPRSSFQETNKGFQPDEK) lie on the Cytoplasmic side of the membrane. The span at 322 to 332 (LQEKTDNEMEP) shows a compositional bias: basic and acidic residues. A disordered region spans residues 322-348 (LQEKTDNEMEPRSSFQETNKGFQPDEK). Ser335 is subject to Phosphoserine.

It belongs to the bile acid:sodium symporter (BASS) (TC 2.A.28) family. As to quaternary structure, monomer and homodimer. In terms of tissue distribution, mainly expressed in ileum and kidney, lower expression in jejunum.

It is found in the membrane. It carries out the reaction taurocholate(out) + 2 Na(+)(out) = taurocholate(in) + 2 Na(+)(in). The enzyme catalyses cholate(out) + 2 Na(+)(out) = cholate(in) + 2 Na(+)(in). The catalysed reaction is taurochenodeoxycholate(out) + 2 Na(+)(out) = taurochenodeoxycholate(in) + 2 Na(+)(in). It catalyses the reaction tauroursodeoxycholate(out) + 2 Na(+)(out) = tauroursodeoxycholate(in) + 2 Na(+)(in). It carries out the reaction glycocholate(out) + 2 Na(+)(out) = glycocholate(in) + 2 Na(+)(in). The enzyme catalyses tauronorcholate(out) + 2 Na(+)(out) = tauronorcholate(in) + 2 Na(+)(in). The catalysed reaction is tauroallocholate(out) + 2 Na(+)(out) = tauroallocholate(in) + 2 Na(+)(in). It catalyses the reaction taurodeoxycholate(out) + 2 Na(+)(out) = taurodeoxycholate(in) + 2 Na(+)(in). It carries out the reaction tauro-beta-muricholate(out) + 2 Na(+)(out) = tauro-beta-muricholate(in) + 2 Na(+)(in). In terms of biological role, plays a critical role in the sodium-dependent reabsorption of bile acids from the lumen of the small intestine. Transports various bile acids, unconjugated or conjugated, such as cholate and taurocholate. Also responsible for bile acid transport in the renal proximal tubules, a salvage mechanism that helps conserve bile acids. Works collaboratively with the Na(+)-taurocholate cotransporting polypeptide (NTCP), the organic solute transporter (OST), and the bile salt export pump (BSEP), to ensure efficacious biological recycling of bile acids during enterohepatic circulation. This is Ileal sodium/bile acid cotransporter (SLC10A2) from Cricetulus griseus (Chinese hamster).